A 416-amino-acid polypeptide reads, in one-letter code: N-carbamoyl-L-amino-acid amidohydrolase (416 aa).

Residues His87, Asp98, Glu133, and His194 each contribute to the a divalent metal cation site. 5 residues coordinate an N-carbamoyl-L-alpha-amino acid: Gln197, His230, Asn279, Arg292, and Gly361. The segment at 213-331 (HCQGLWWLEF…SIEAVGHFDP (119 aa)) is involved in dimerization. His386 contacts a divalent metal cation.

Belongs to the peptidase M20 family. Homodimer. Requires Mn(2+) as cofactor. Ni(2+) is required as a cofactor. Co(2+) serves as cofactor. The cofactor is Fe(2+).

The catalysed reaction is an N-carbamoyl-L-alpha-amino acid + H2O + 2 H(+) = an L-alpha-amino acid + NH4(+) + CO2. It carries out the reaction N-carbamoyl-L-methionine + H2O + 2 H(+) = L-methionine + NH4(+) + CO2. The enzyme catalyses N-acetyl-L-methionine + H2O = L-methionine + acetate. It catalyses the reaction N(alpha)-formyl-L-methionine + H2O = formate + L-methionine. The catalysed reaction is N-carbamoyl-L-alanine + H2O + 2 H(+) = L-alanine + NH4(+) + CO2. It carries out the reaction N-carbamoyl-L-cysteine + H2O + 2 H(+) = L-cysteine + NH4(+) + CO2. The enzyme catalyses N-carbamoyl-L-tryptophan + H2O + 2 H(+) = L-tryptophan + NH4(+) + CO2. It catalyses the reaction N-carbamoyl-L-valine + H2O + 2 H(+) = L-valine + NH4(+) + CO2. The catalysed reaction is N-carbamoyl-L-phenylalanine + H2O + 2 H(+) = L-phenylalanine + NH4(+) + CO2. Strongly inhibited by Hg(2+), Cu(2+), Zn(2+), Pb(2+) and Fe(3+) ions, and slightly inhibited by Na(+) and K(+) ions. Beta-mercaptoethanol and 5,5'-dithiobis-(2-nitrobenzoic acid)(DTNB) cause 34% and 42% inhibition, respectively. Its function is as follows. Catalyzes the hydrolysis of both aliphatic and aromatic N-carbamoyl-L-alpha-amino acids to free L-alpha-amino acids. Is strictly L-specific since it is inactive toward N-carbamoyl-D-alpha-amino acids. Is also able to hydrolyze N-formyl-L-methionine and N-acetyl-L-methionine, but not ureidosuccinate or 3-ureidopropanoate. This chain is N-carbamoyl-L-amino-acid amidohydrolase, found in Rhizobium meliloti (Ensifer meliloti).